The following is a 383-amino-acid chain: Protein delta homolog 1 (383 aa).

The signal sequence occupies residues 1-23; the sequence is MTATEALLRVLLLLLAFGHSTYG. EGF-like domains are found at residues 24-55, 53-86, 88-125, 127-168, 170-206, and 208-245; these read AECF…PLCD, LCDQ…ELCD, DVRA…KDCQ, KDGP…NFCE, VANS…KTCS, and PVTN…LTCV. Residues 24–303 lie on the Extracellular side of the membrane; the sequence is AECFPACNPQ…KKTPLLTEGQ (280 aa). Cystine bridges form between cysteine 26/cysteine 37, cysteine 30/cysteine 43, cysteine 45/cysteine 54, cysteine 57/cysteine 68, cysteine 63/cysteine 74, cysteine 76/cysteine 85, cysteine 92/cysteine 103, cysteine 97/cysteine 113, cysteine 115/cysteine 124, cysteine 131/cysteine 144, cysteine 138/cysteine 156, and cysteine 158/cysteine 167. Serine 94 carries O-linked (GalNAc...) serine glycosylation. A glycan (N-linked (GlcNAc...) asparagine) is linked at asparagine 100. Threonine 143 is a glycosylation site (O-linked (GalNAc...) threonine). An O-linked (GalNAc...) serine; partial glycan is attached at serine 163. Residues asparagine 165 and asparagine 172 are each glycosylated (N-linked (GlcNAc...) asparagine; atypical; partial). 6 cysteine pairs are disulfide-bonded: cysteine 174/cysteine 185, cysteine 179/cysteine 194, cysteine 196/cysteine 205, cysteine 212/cysteine 223, cysteine 217/cysteine 233, and cysteine 235/cysteine 244. An O-linked (GalNAc...) serine glycan is attached at serine 214. Threonine 222 carries O-linked (GalNAc...) threonine; partial glycosylation. The O-linked (GalNAc...) serine; partial glycan is linked to serine 251. Threonine 256 is a glycosylation site (O-linked (GalNAc...) threonine). Serine 260 is a glycosylation site (O-linked (GalNAc...) serine; partial). The chain crosses the membrane as a helical span at residues 304 to 327; sequence AICFTILGVLTSLVVLGTVGIVFL. Residues 328-383 lie on the Cytoplasmic side of the membrane; it reads NKCETWVSNLRYNHMLRKKKNLLLQYNSGEDLAVNIIFPEKIDMTTFSKEAGDEEI.

In terms of assembly, monomer. Interacts with SH3RF2. In terms of processing, N- and O-glycosylated. O-glycosylated with core 1 or possibly core 8 glycans. In terms of tissue distribution, found within the stromal cells in close contact to the vascular structure of placental villi, yolk sac, fetal liver, adrenal cortex and pancreas and in the beta cells of the islets of Langerhans in the adult pancreas. Found also in some forms of neuroendocrine lung tumor tissue.

It localises to the membrane. It is found in the cytoplasm. Its function is as follows. May have a role in neuroendocrine differentiation. The sequence is that of Protein delta homolog 1 (DLK1) from Homo sapiens (Human).